A 98-amino-acid chain; its full sequence is Serine rich endogenous peptide 10 (98 aa).

A signal peptide spans 1–29 (MERKKFSSKFIHLLIVFLLLCTFLSRTES). Positions 50 to 98 (NSAIGTPSSTSDHAPGSNGRKLMSIYRPNGDIFTGPSGSGHGGGRTPAP) are disordered. Positions 52–61 (AIGTPSSTSD) are enriched in polar residues. 2 consecutive short sequence motifs (SCOOP motif) follow at residues 52–66 (AIGT…APGS) and 80–94 (DIFT…GGGR). 2 consecutive short sequence motifs (sxS motif essential for MIK2 binding) follow at residues 58–60 (STS) and 86–88 (SGS). A compositionally biased stretch (gly residues) spans 86–98 (SGSGHGGGRTPAP).

Belongs to the serine rich endogenous peptide (SCOOP) phytocytokine family. In terms of assembly, interacts with MIK2 (via extracellular leucine-rich repeat domain); this interaction triggers the formation of complex between MIK2 and the BAK1/SERK3 and SERK4 coreceptors, and subsequent BAK1 activation by phosphorylation. In terms of tissue distribution, mostly expressed in leaves and seedlings shoots, to a lower extent, in roots, but barely in flowers.

The protein localises to the cell membrane. The protein resides in the secreted. It localises to the extracellular space. It is found in the apoplast. In terms of biological role, brassicaceae-specific phytocytokine (plant endogenous peptide released into the apoplast) perceived by MIK2 in a BAK1/SERK3 and SERK4 coreceptors-dependent manner, that modulates various physiological and antimicrobial processes including growth prevention and reactive oxygen species (ROS) response regulation. Inhibits root growth and regulates root meristems. Promotes ROS production and MAPK (e.g. MPK3, MPK4 and MPK6) activation in a MIK2-dependent manner, thus leading to the up-regulation of immune-related marker genes (e.g. WRKY30, WRKY33 and CYP81F2). In Arabidopsis thaliana (Mouse-ear cress), this protein is Serine rich endogenous peptide 10.